The following is a 519-amino-acid chain: Protein amnionless (519 aa).

Residues 1 to 19 form the signal peptide; sequence MGAPGRVLLWLQLCALTRA. Residues 20–430 lie on the Extracellular side of the membrane; the sequence is AYKLWVPNTY…NAPGARSDLM (411 aa). 2 N-linked (GlcNAc...) asparagine glycosylation sites follow: asparagine 35 and asparagine 39. 6 disulfide bridges follow: cysteine 43–cysteine 152, cysteine 193–cysteine 267, cysteine 259–cysteine 265, cysteine 277–cysteine 303, cysteine 288–cysteine 304, and cysteine 293–cysteine 307. Residues 67-143 form an interaction with CUBN region; it reads SDMEELQDRK…VLASGAGFSA (77 aa). Residues 256–308 form the VWFC domain; sequence PEACADPSGCVCGNAEVQPWICAALLQPLGGRCPQAACQDALRPEGQCCDLCG. Residues 431-451 form a helical membrane-spanning segment; it reads GGLVAALLLLLLVLLVAALLL. At 452–519 the chain is on the cytoplasmic side; it reads RRAGRLRWSR…YGEAEAEAEA (68 aa).

As to quaternary structure, interacts (via extracellular region) with CUBN/cubilin, giving rise to a huge complex containing one AMN chain and three CUBN chains. In terms of processing, N-glycosylated. A soluble form arises by proteolytic removal of the membrane anchor. Detected in kidney cortex (at protein level).

It is found in the apical cell membrane. The protein resides in the cell membrane. It localises to the endosome membrane. Its subcellular location is the membrane. The protein localises to the coated pit. Its function is as follows. Membrane-bound component of the endocytic receptor formed by AMN and CUBN. Required for normal CUBN glycosylation and trafficking to the cell surface. The complex formed by AMN and CUBN is required for efficient absorption of vitamin B12. Required for normal CUBN-mediated protein transport in the kidney. The protein is Protein amnionless (AMN) of Sus scrofa (Pig).